The chain runs to 275 residues: Large ribosomal subunit protein uL2 (275 aa).

The segment at 236–263 (EGRGKGQHPVTPWGMPTKGYKTRRGRRA) is disordered.

Belongs to the universal ribosomal protein uL2 family. As to quaternary structure, part of the 50S ribosomal subunit. Forms a bridge to the 30S subunit in the 70S ribosome.

Its function is as follows. One of the primary rRNA binding proteins. Required for association of the 30S and 50S subunits to form the 70S ribosome, for tRNA binding and peptide bond formation. It has been suggested to have peptidyltransferase activity; this is somewhat controversial. Makes several contacts with the 16S rRNA in the 70S ribosome. The protein is Large ribosomal subunit protein uL2 of Pseudothermotoga lettingae (strain ATCC BAA-301 / DSM 14385 / NBRC 107922 / TMO) (Thermotoga lettingae).